The following is a 209-amino-acid chain: Redox-sensing transcriptional repressor Rex (209 aa).

Positions 16–55 (LYYRFIQNLSLSGKQRVSSAELSEAVKVDSATIRRDFSYF) form a DNA-binding region, H-T-H motif. 90–95 (GVGNLG) serves as a coordination point for NAD(+).

The protein belongs to the transcriptional regulatory Rex family. Homodimer.

The protein localises to the cytoplasm. In terms of biological role, modulates transcription in response to changes in cellular NADH/NAD(+) redox state. The protein is Redox-sensing transcriptional repressor Rex of Bacillus mycoides (strain KBAB4) (Bacillus weihenstephanensis).